The sequence spans 203 residues: Ribosomal RNA small subunit methyltransferase G (203 aa).

S-adenosyl-L-methionine contacts are provided by residues glycine 73, leucine 78, 124 to 125 (VE), and arginine 139.

The protein belongs to the methyltransferase superfamily. RNA methyltransferase RsmG family.

The protein resides in the cytoplasm. It carries out the reaction guanosine(527) in 16S rRNA + S-adenosyl-L-methionine = N(7)-methylguanosine(527) in 16S rRNA + S-adenosyl-L-homocysteine. Functionally, specifically methylates the N7 position of guanine in position 527 of 16S rRNA. This chain is Ribosomal RNA small subunit methyltransferase G, found in Haemophilus influenzae (strain 86-028NP).